We begin with the raw amino-acid sequence, 184 residues long: Bifunctional protein PyrR (184 aa).

The short motif at 105–117 (VVMVDDVLFTGRT) is the PRPP-binding element.

It belongs to the purine/pyrimidine phosphoribosyltransferase family. PyrR subfamily.

The enzyme catalyses UMP + diphosphate = 5-phospho-alpha-D-ribose 1-diphosphate + uracil. Functionally, regulates the transcription of the pyrimidine nucleotide (pyr) operon in response to exogenous pyrimidines. Its function is as follows. Also displays a weak uracil phosphoribosyltransferase activity which is not physiologically significant. The protein is Bifunctional protein PyrR of Rubrobacter xylanophilus (strain DSM 9941 / JCM 11954 / NBRC 16129 / PRD-1).